We begin with the raw amino-acid sequence, 194 residues long: Inosine triphosphate pyrophosphatase (194 aa).

Alanine 2 is modified (N-acetylalanine). Residue threonine 14–lysine 19 participates in ITP binding. Glutamate 44 contacts Mg(2+). ITP-binding positions include lysine 56, aspartate 72–threonine 73, lysine 89, phenylalanine 149–aspartate 152, lysine 172, and histidine 177–arginine 178.

This sequence belongs to the HAM1 NTPase family. In terms of assembly, homodimer. The cofactor is Mg(2+). Ubiquitous. Highly expressed in heart, liver, sex glands, thyroid and adrenal gland.

It localises to the cytoplasm. The catalysed reaction is ITP + H2O = IMP + diphosphate + H(+). It catalyses the reaction dITP + H2O = dIMP + diphosphate + H(+). The enzyme catalyses XTP + H2O = XMP + diphosphate + H(+). It carries out the reaction N(6)-hydroxy-dATP + H2O = N(6)-hydroxy-dAMP + diphosphate + H(+). Pyrophosphatase that hydrolyzes the non-canonical purine nucleotides inosine triphosphate (ITP), deoxyinosine triphosphate (dITP) as well as 2'-deoxy-N-6-hydroxylaminopurine triphosphate (dHAPTP) and xanthosine 5'-triphosphate (XTP) to their respective monophosphate derivatives. The enzyme does not distinguish between the deoxy- and ribose forms. Probably excludes non-canonical purines from RNA and DNA precursor pools, thus preventing their incorporation into RNA and DNA and avoiding chromosomal lesions. The sequence is that of Inosine triphosphate pyrophosphatase from Homo sapiens (Human).